The following is a 616-amino-acid chain: 1-deoxy-D-xylulose-5-phosphate synthase (616 aa).

Residues His-74 and 115–117 contribute to the thiamine diphosphate site; that span reads GHS. Asp-146 is a binding site for Mg(2+). Residues 147 to 148, Asn-175, Tyr-282, and Glu-365 contribute to the thiamine diphosphate site; that span reads GA. Asn-175 is a binding site for Mg(2+).

This sequence belongs to the transketolase family. DXPS subfamily. As to quaternary structure, homodimer. Mg(2+) is required as a cofactor. The cofactor is thiamine diphosphate.

It carries out the reaction D-glyceraldehyde 3-phosphate + pyruvate + H(+) = 1-deoxy-D-xylulose 5-phosphate + CO2. Its pathway is metabolic intermediate biosynthesis; 1-deoxy-D-xylulose 5-phosphate biosynthesis; 1-deoxy-D-xylulose 5-phosphate from D-glyceraldehyde 3-phosphate and pyruvate: step 1/1. Functionally, catalyzes the acyloin condensation reaction between C atoms 2 and 3 of pyruvate and glyceraldehyde 3-phosphate to yield 1-deoxy-D-xylulose-5-phosphate (DXP). The polypeptide is 1-deoxy-D-xylulose-5-phosphate synthase (Chromobacterium violaceum (strain ATCC 12472 / DSM 30191 / JCM 1249 / CCUG 213 / NBRC 12614 / NCIMB 9131 / NCTC 9757 / MK)).